Reading from the N-terminus, the 627-residue chain is Glycerophosphodiester phosphodiesterase domain-containing protein 4 (627 aa).

Residues 1 to 17 lie on the Cytoplasmic side of the membrane; the sequence is MLLFLWIETSNEYFNFD. Residues 18–38 traverse the membrane as a helical segment; that stretch reads WVIFLGTGYWFYWSIFILSLA. Position 39 (Gly-39) is a topological domain, extracellular. The chain crosses the membrane as a helical span at residues 40-60; sequence ILTAYSSLLLLLGLLLLWEGI. The Cytoplasmic portion of the chain corresponds to 61–69; that stretch reads ELYLHLCHK. Residues 70 to 90 form a helical membrane-spanning segment; that stretch reads ILILLVILPCVILMFIICKFW. Residues 91–107 lie on the Extracellular side of the membrane; it reads KERWLVAGLSLQIFAPY. The chain crosses the membrane as a helical span at residues 108–128; sequence VHLVSITVMVILFWPVAIYVA. The Cytoplasmic segment spans residues 129-162; it reads RLEREVRMRRYRMTHSEKKRLKKCNVIARLRGLQ. A helical membrane pass occupies residues 163 to 183; sequence VAVGLPFLLIFLSLCLMPLGI. The Extracellular segment spans residues 184-468; the sequence is YSPCIQEKEN…PHFFMTPKFY (285 aa). Positions 198–457 constitute a GP-PDE domain; the sequence is PTLFGHRGAP…DNIGLLSQLN (260 aa). Positions 230, 232, and 245 each coordinate a divalent metal cation. N-linked (GlcNAc...) asparagine glycosylation is found at Asn-308 and Asn-397. The helical transmembrane segment at 469–489 threads the bilayer; that stretch reads MFIWLLVDIISVLFIVAIFCF. At 490–627 the chain is on the cytoplasmic side; the sequence is HWRRETIKEK…TMPSVEVPYP (138 aa).

It belongs to the glycerophosphoryl diester phosphodiesterase family.

The protein resides in the membrane. The polypeptide is Glycerophosphodiester phosphodiesterase domain-containing protein 4 (GDPD4) (Macaca fascicularis (Crab-eating macaque)).